We begin with the raw amino-acid sequence, 950 residues long: Protocadherin alpha-13 (950 aa).

Positions 1–29 are cleaved as a signal peptide; sequence MLSSWQGGPRPRQLLLWLLILAAWETGSG. Residues 30 to 697 are Extracellular-facing; sequence QLHYSVPEEA…GPEAALVDVN (668 aa). 6 Cadherin domains span residues 34-133, 134-242, 243-350, 351-455, 456-565, and 581-678; these read SVPE…PPIF, PESK…APEF, YQSV…APEV, TITS…APAF, AQPE…APAL, and MPRS…APQA. N-linked (GlcNAc...) asparagine glycans are attached at residues N257 and N265. N548 carries an N-linked (GlcNAc...) asparagine glycan. A helical membrane pass occupies residues 698 to 718; sequence VYLIIAICAVSSLLVLTLLLY. Topologically, residues 719–950 are cytoplasmic; the sequence is TALRCSAPPT…GNSTTDNSDQ (232 aa). PXXP repeat units follow at residues 734–737, 774–777, 799–802, 832–835, 873–876, and 891–894; these read PGKP, PSLP, PRQP, PGGP, PGNP, and PGSP. A 6 X 4 AA repeats of P-X-X-P region spans residues 734–894; it reads PGKPTLVCSS…PDKFIIPGSP (161 aa). 2 disordered regions span residues 780–806 and 829–950; these read LGSAEGTGQREEDSECLKEPRQPNPDW and RAGP…NSDQ. A compositionally biased stretch (basic and acidic residues) spans 787–800; it reads GQREEDSECLKEPR. Positions 909–923 are enriched in basic and acidic residues; sequence DKSDFITFGKKEETK.

It is found in the cell membrane. Potential calcium-dependent cell-adhesion protein. May be involved in the establishment and maintenance of specific neuronal connections in the brain. The chain is Protocadherin alpha-13 (PCDHA13) from Homo sapiens (Human).